Reading from the N-terminus, the 222-residue chain is Superoxide dismutase [Mn], mitochondrial (222 aa).

The N-terminal 24 residues, 1 to 24, are a transit peptide targeting the mitochondrion; that stretch reads MLSRAVCGTSRQLAPVLGYLGSRQ. Histidine 50 is a Mn(2+) binding site. Tyrosine 58 is subject to 3'-nitrotyrosine. Lysine 68 and lysine 75 each carry N6-acetyllysine; alternate. Residues lysine 68 and lysine 75 each carry the N6-succinyllysine; alternate modification. Histidine 98 provides a ligand contact to Mn(2+). Lysine 114 carries the post-translational modification N6-acetyllysine. N6-acetyllysine; alternate is present on residues lysine 122 and lysine 130. N6-succinyllysine; alternate is present on residues lysine 122 and lysine 130. 2 residues coordinate Mn(2+): aspartate 183 and histidine 187. Lysine 202 is modified (N6-acetyllysine).

Belongs to the iron/manganese superoxide dismutase family. As to quaternary structure, homotetramer. It depends on Mn(2+) as a cofactor. Nitrated under oxidative stress. Nitration coupled with oxidation inhibits the catalytic activity. Post-translationally, acetylation at Lys-122 decreases enzymatic activity. Deacetylated by SIRT3 upon exposure to ionizing radiations or after long fasting. In terms of processing, polyubiquitinated; leading to proteasomal degradation. Deubiquitinated by USP36 which increases protein stability.

Its subcellular location is the mitochondrion matrix. The catalysed reaction is 2 superoxide + 2 H(+) = H2O2 + O2. Functionally, destroys superoxide anion radicals which are normally produced within the cells and which are toxic to biological systems. The chain is Superoxide dismutase [Mn], mitochondrial (SOD2) from Homo sapiens (Human).